Here is a 551-residue protein sequence, read N- to C-terminus: Protein GPR107 (551 aa).

A signal peptide spans 1–33 (MAVPVPLGRFGSFCLRLLRLLALLELLVHPVLG). Residues 40–262 (LKDDVRHKVH…YLSAGEIPLP (223 aa)) are Extracellular-facing. Residues asparagine 64 and asparagine 209 are each glycosylated (N-linked (GlcNAc...) asparagine). A disulfide bridge connects residues cysteine 106 and cysteine 226. The chain crosses the membrane as a helical span at residues 263–283 (KLYVSMALFFFLSGTIWIHIL). Topologically, residues 284 to 292 (RKRRNDVFK) are cytoplasmic. Residues 293–313 (IHWLMAALPFTKSLSLVFHAI) form a helical membrane-spanning segment. Residues 314 to 336 (DYHYISSQGFPIEGWAVVYYITH) lie on the Extracellular side of the membrane. The helical transmembrane segment at 337–357 (LLKGALLFITIALIGTGWAFI) threads the bilayer. The Cytoplasmic segment spans residues 358–367 (KHILSDKDKK). A helical transmembrane segment spans residues 368–388 (IFMIVIPLQVLANVAYIIIES). Residues 389–401 (TEEGTTEYGLWKD) lie on the Extracellular side of the membrane. The helical transmembrane segment at 402-422 (SLFLVDLLCCGAILFPVVWSI) threads the bilayer. Topologically, residues 423 to 449 (RHLQEASATDGKAAINLAKLRLFRHYY) are cytoplasmic. Residues 450–470 (VLIVCYIYFTRIIAFLLKFAV) traverse the membrane as a helical segment. Residues 471–475 (PFQWK) lie on the Extracellular side of the membrane. Residues 476-495 (WLYQLLDETATLVFFVLTGY) traverse the membrane as a helical segment. The Cytoplasmic portion of the chain corresponds to 496-551 (KFRPASDNPYLQLSQEDDDLEMESVVTTSGVMENMKKVKKVSNGAVEPQGSWEGTA). Residue serine 537 is modified to Phosphoserine.

It belongs to the LU7TM family. In terms of processing, cleaved by FURIN to yield two fragments that remain associated via a disulfide bond.

It localises to the cell membrane. It is found in the golgi apparatus. The protein localises to the trans-Golgi network membrane. Its function is as follows. Has been proposed to act as a receptor for neuronostatin, a peptide derived from the somatostatin/SST precursor. Involved in blood sugar regulation through the induction of glucagon in response to low glucose. This Mus musculus (Mouse) protein is Protein GPR107 (Gpr107).